A 116-amino-acid chain; its full sequence is Ly-6/neurotoxin-like protein 1 (116 aa).

The N-terminal stretch at 1–20 (MTPLLTLILVVLMGLPLAQA) is a signal peptide. Residues 21 to 107 (LDCHVCAYNG…TPATLALAPI (87 aa)) enclose the UPAR/Ly6 domain. Cystine bridges form between C23–C46, C26–C33, C39–C64, C68–C85, and C86–C91. C91 carries GPI-anchor amidated cysteine lipidation. The propeptide at 92–116 (NGTGLATPATLALAPILLATLWGLL) is removed in mature form.

As to quaternary structure, interacts with nAChRs containing alpha-4:beta-2 (CHRNA4:CHRNB2) and alpha-7 (CHRNA7) subunits. Interacts with CHRNA4 probably in the endoplasmic reticulum prior to nAChR pentameric assembly. Interacts with KCNA2/Potassium voltage-gated channel subfamily A member 2.

It localises to the cell membrane. The protein resides in the cell projection. Its subcellular location is the dendrite. The protein localises to the endoplasmic reticulum. In terms of biological role, acts in different tissues through interaction to nicotinic acetylcholine receptors (nAChRs). The proposed role as modulator of nAChR activity seems to be dependent on the nAChR subtype and stoichiometry, and to involve an effect on nAChR trafficking and its cell surface expression, and on single channel properties of the nAChR inserted in the plasma membrane. Modulates functional properties of nicotinic acetylcholine receptors (nAChRs) to prevent excessive excitation, and hence neurodegeneration. Enhances desensitization by increasing both the rate and extent of desensitization of alpha-4:beta-2-containing nAChRs and slowing recovery from desensitization. Promotes large amplitude ACh-evoked currents through alpha-4:beta-2 nAChRs. Is involved in regulation of the nAChR pentameric assembly in the endoplasmic reticulum. Shifts stoichiometry from high sensitivity alpha-4(2):beta-2(3) to low sensitivity alpha-4(3):beta-2(2) nAChR. In vitro modulates alpha-3:beta-4-containing nAChRs. Reduces cell surface expression of (alpha-3:beta-4)(2):beta-4 and (alpha-3:beta-4)(2):alpha-5 nAChRs suggesting an interaction with nAChR alpha-3(-):(+)beta-4 subunit interfaces and an allosteric mode. Corresponding single channel effects characterized by decreased unitary conductance, altered burst proportions and enhanced desensitization/inactivation seem to depend on nAChR alpha:alpha subunit interfaces and are greater in (alpha-3:beta-2)(2):alpha-3 when compared to (alpha-3:beta-2)(2):alpha-5 nAChRs. Prevents plasticity in the primary visual cortex late in life. The chain is Ly-6/neurotoxin-like protein 1 from Homo sapiens (Human).